Reading from the N-terminus, the 587-residue chain is DELLA protein RGA (587 aa).

The tract at residues 1 to 26 (MKRDHHQFQGRLSNHGTSSSSSSISK) is disordered. The short motif at 44 to 48 (DELLA) is the DELLA motif element. The LEXLE motif motif lies at 66–70 (LEQLE). The VHYNP motif signature appears at 89 to 93 (VHYNP). Positions 152–181 (IDSSSSSNNQNKRLKSCSSPDSMVTSTSTG) are disordered. Over residues 153–175 (DSSSSSNNQNKRLKSCSSPDSMV) the composition is skewed to polar residues. One can recognise a GRAS domain in the interval 212–581 (VDSQENGVRL…RPLITTSAWK (370 aa)). Residues 219-273 (VRLVHALMACAEAIQQNNLTLAEALVKQIGCLAVSQAGAMRKVATYFAEALARRI) are leucine repeat I (LRI). Positions 292 to 357 (QMHFYETCPY…GGPPTFRLTG (66 aa)) are VHIID. The short motif at 323 to 327 (VHVID) is the VHIID element. A leucine repeat II (LRII) region spans residues 371–403 (EVGCKLAQLAEAIHVEFEYRGFVANSLADLDAS). The interval 415–502 (VAVNSVFELH…EVYLGKQICN (88 aa)) is PFYRE. The LXXLL motif motif lies at 423-427 (LHKLL). The SAW stretch occupies residues 505–581 (ACEGPDRVER…RPLITTSAWK (77 aa)).

Belongs to the GRAS family. DELLA subfamily. As to quaternary structure, interacts directly with the GID2/SLY1 component of the SCF(GID2) complex. Interacts (via N-terminus) with GID1A, GID1B and GID1B (via N-terminus). Binds to bHLH transcription factors such as MYC2, PIF1, PIF4, PIF6 and SPT. Interacts with the BOI proteins BOI, BRG1, BRG2 and BRG3. Interacts with NFYC9. Interacts with TOPP4. Interacts with FLZ5. Binds to zinc finger proteins MGP/IDD3, IDD4, IDD5, BIB/IDD9 and JKD/IDD10 in the nucleus. Binds to and coactivates GAF1/IDD2 and ENY/IDD1. Binds to PDF2 and ATML1. Post-translationally, phosphorylated. Phosphorylation may increase the interaction with GID2. In terms of processing, gibberellin (GA) induces dephosphorylation of RGA by TOPP4 and subsequent degradation by the proteasomal pathway. Ubiquitinated. Upon GA application it is ubiquitinated by the SCF(GID2) complex, leading to its subsequent degradation. Post-translationally, O-fucosylated by SPY. O-fucosylation enhances RGA activity by promoting RGA binding to key transcription factors in brassinosteroid and light signaling pathways. In terms of tissue distribution, ubiquitously expressed. Expressed in roots, rosette leaves, bolting and mature stems, young and mature siliques, flower buds and influorescences.

It localises to the nucleus. Functionally, probable transcriptional regulator that acts as a repressor of the gibberellin (GA) signaling pathway. Probably acts by participating in large multiprotein complexes that repress transcription of GA-inducible genes. Positively regulates XERICO expression in seeds. Upon GA application, it is degraded by the proteasome, allowing the GA signaling pathway. Compared to other DELLA proteins, it is the most sensitive to GA application. No effect of the BOI proteins on its stability. Its activity is probably regulated by other phytohormones such as auxin and ethylene, attenuation of auxin transport delaying its GA-induced degradation. Involved in the regulation of seed dormancy and germination, including glucose-induced delay of seed germination. This Arabidopsis thaliana (Mouse-ear cress) protein is DELLA protein RGA.